The primary structure comprises 509 residues: Lengsin (509 aa).

Residues 1-34 (MNNEEDLLQEDSTRDEGNETEANSMNTLRRTRKK) are disordered. Positions 83-177 (NRLQFVRFEA…VICDTFTVTG (95 aa)) constitute a GS beta-grasp domain. Residues 184-509 (PRYIAKRQLS…ERNKFLEYFI (326 aa)) form the GS catalytic domain.

It belongs to the glutamine synthetase family. Dodecamer. Interacts with BFSP2 and VIM. In terms of tissue distribution, abundantly expressed in lens.

Its function is as follows. May act as a component of the cytoskeleton or as a chaperone for the reorganization of intermediate filament proteins during terminal differentiation in the lens. Does not seem to have enzymatic activity. The sequence is that of Lengsin (LGSN) from Homo sapiens (Human).